The primary structure comprises 329 residues: GTP 3',8-cyclase (329 aa).

The region spanning 8–234 (AFARKFFYLR…QIRQRSDGPA (227 aa)) is the Radical SAM core domain. Residue arginine 17 participates in GTP binding. 2 residues coordinate [4Fe-4S] cluster: cysteine 24 and cysteine 28. Residue tyrosine 30 coordinates S-adenosyl-L-methionine. Cysteine 31 contacts [4Fe-4S] cluster. Arginine 68 is a GTP binding site. Residue glycine 72 participates in S-adenosyl-L-methionine binding. GTP is bound at residue threonine 99. Serine 123 is an S-adenosyl-L-methionine binding site. Lysine 160 serves as a coordination point for GTP. Methionine 194 is an S-adenosyl-L-methionine binding site. [4Fe-4S] cluster-binding residues include cysteine 257 and cysteine 260. 262 to 264 (RLR) is a binding site for GTP. Residue cysteine 274 participates in [4Fe-4S] cluster binding.

Belongs to the radical SAM superfamily. MoaA family. Monomer and homodimer. It depends on [4Fe-4S] cluster as a cofactor.

It carries out the reaction GTP + AH2 + S-adenosyl-L-methionine = (8S)-3',8-cyclo-7,8-dihydroguanosine 5'-triphosphate + 5'-deoxyadenosine + L-methionine + A + H(+). The protein operates within cofactor biosynthesis; molybdopterin biosynthesis. Catalyzes the cyclization of GTP to (8S)-3',8-cyclo-7,8-dihydroguanosine 5'-triphosphate. This chain is GTP 3',8-cyclase, found in Klebsiella pneumoniae (strain 342).